The primary structure comprises 183 residues: Inner membrane-spanning protein YciB (183 aa).

The next 5 membrane-spanning stretches (helical) occupy residues 19 to 39, 53 to 73, 76 to 96, 121 to 141, and 151 to 171; these read LYGV…QLIV, IMGI…DLNF, WKVT…QFVF, LGWA…SYYF, and TFGF…YLYP.

This sequence belongs to the YciB family.

The protein resides in the cell inner membrane. In terms of biological role, plays a role in cell envelope biogenesis, maintenance of cell envelope integrity and membrane homeostasis. The polypeptide is Inner membrane-spanning protein YciB (Actinobacillus pleuropneumoniae serotype 3 (strain JL03)).